The following is a 377-amino-acid chain: MAALQAAVSSQLAISFFSSLIVPGAEKNVVCSPLSISSALALVAAGSRGKTLKEIADALNWREDADGLAKALLAEAEKAAQNCDASCPVKTANNVWVDNEFKILDSYRDLLKSFAVNVGKADFKKHSSDETIKINSWIEDHTNKKIRDFFPPGELSEATKAVLVNALYFKGKWAEPFDMESTRDDTFHVSNSKEVQVKMMYHSAELKYFMDENSKCDLVELPYSSKAFSMMLIVPHEVEGLSAVQSSLSLSQVSGWISNVQSAAPQTVDVFLPRFKVSQKVNMKDNLKSLGINDMFSMQANLSGIAGSHDLFVSSAIHQAVIEVNEEGTEAAAATGFGVNFMSMPMQVRADKPFLFLIISNVTKSILFIGKIANPAA.

Positions 1 to 27 (MAALQAAVSSQLAISFFSSLIVPGAEK) are cleaved as a signal peptide. Asparagine 301 carries an N-linked (GlcNAc...) asparagine glycan. Residues 328 to 349 (GTEAAAATGFGVNFMSMPMQVR) are RCL. Asparagine 361 carries an N-linked (GlcNAc...) asparagine glycan.

This sequence belongs to the serpin family.

Its function is as follows. Inhibitor of serine proteases. Inhibits chymotrypsin, cathepsin G and human neutrophil elastase. The sequence is that of Serine protease inhibitor from Cyanea capillata (Lion's mane jellyfish).